The following is a 410-amino-acid chain: E3 ubiquitin-protein ligase PRT1 (410 aa).

2 consecutive RING-type zinc fingers follow at residues 26–66 (CCVC…PICR) and 192–232 (CSAC…QECN). The segment at 306–370 (HFGAGCDSCG…RLELARSPQV (65 aa)) adopts a ZZ-type zinc-finger fold. The Zn(2+) site is built by Cys311, Cys314, Cys326, Cys329, Cys338, Cys341, His356, and His360. The tract at residues 385-410 (ISNEGMDTDEGEEGPPGSSNESSSTE) is disordered. A compositionally biased stretch (low complexity) spans 399-410 (PPGSSNESSSTE).

Its subcellular location is the cytoplasm. It carries out the reaction S-ubiquitinyl-[E2 ubiquitin-conjugating enzyme]-L-cysteine + [acceptor protein]-L-lysine = [E2 ubiquitin-conjugating enzyme]-L-cysteine + N(6)-ubiquitinyl-[acceptor protein]-L-lysine.. The protein operates within protein modification; protein ubiquitination. Functionally, E3 ubiquitin-protein ligase that mediates ubiquitination and subsequent proteasomal degradation of target proteins. Functions in the N-end rule pathway of protein degradation, where it specifically recognizes and ubiquitinates proteins with a N-terminal bulky aromatic amino acid (Phe). Does not act on aliphatic hydrophobic and basic N-terminal residues (Arg or Leu) containing proteins. The sequence is that of E3 ubiquitin-protein ligase PRT1 (PRT1) from Arabidopsis thaliana (Mouse-ear cress).